We begin with the raw amino-acid sequence, 712 residues long: Small ribosomal subunit protein uS3c (712 aa).

Residues 1-118 form an S3-like 1st part region; sequence MGQKVHPLGF…IKVSKDLVTN (118 aa). An intervening sequence (IVS) region spans residues 119–580; it reads LQKTRKYLFK…LQTAFLTQIE (462 aa). The interval 581–712 is S3-like 2nd part; the sequence is SQRKMYKANL…VWIFKGYSKI (132 aa).

This sequence belongs to the universal ribosomal protein uS3 family. Part of the 30S ribosomal subunit.

It localises to the plastid. Its subcellular location is the chloroplast. The sequence is that of Small ribosomal subunit protein uS3c (rps3) from Chlamydomonas reinhardtii (Chlamydomonas smithii).